A 440-amino-acid chain; its full sequence is tRNA-2-methylthio-N(6)-dimethylallyladenosine synthase (440 aa).

One can recognise an MTTase N-terminal domain in the interval 4-122 (KSYYIITHGC…LPKILERVFE (119 aa)). [4Fe-4S] cluster-binding residues include C13, C49, C83, C159, C163, and C166. The Radical SAM core domain maps to 145-375 (REPGVRAWVT…IELQNGISLE (231 aa)). The 63-residue stretch at 378-440 (KNEEGNIHEI…KLFHLEGVLV (63 aa)) folds into the TRAM domain.

The protein belongs to the methylthiotransferase family. MiaB subfamily. As to quaternary structure, monomer. It depends on [4Fe-4S] cluster as a cofactor.

The protein resides in the cytoplasm. It catalyses the reaction N(6)-dimethylallyladenosine(37) in tRNA + (sulfur carrier)-SH + AH2 + 2 S-adenosyl-L-methionine = 2-methylsulfanyl-N(6)-dimethylallyladenosine(37) in tRNA + (sulfur carrier)-H + 5'-deoxyadenosine + L-methionine + A + S-adenosyl-L-homocysteine + 2 H(+). Functionally, catalyzes the methylthiolation of N6-(dimethylallyl)adenosine (i(6)A), leading to the formation of 2-methylthio-N6-(dimethylallyl)adenosine (ms(2)i(6)A) at position 37 in tRNAs that read codons beginning with uridine. This Carboxydothermus hydrogenoformans (strain ATCC BAA-161 / DSM 6008 / Z-2901) protein is tRNA-2-methylthio-N(6)-dimethylallyladenosine synthase.